Reading from the N-terminus, the 343-residue chain is N-acetyl-gamma-glutamyl-phosphate reductase (343 aa).

The active site involves Cys-152.

Belongs to the NAGSA dehydrogenase family. Type 1 subfamily.

The protein resides in the cytoplasm. The catalysed reaction is N-acetyl-L-glutamate 5-semialdehyde + phosphate + NADP(+) = N-acetyl-L-glutamyl 5-phosphate + NADPH + H(+). It functions in the pathway amino-acid biosynthesis; L-arginine biosynthesis; N(2)-acetyl-L-ornithine from L-glutamate: step 3/4. Its function is as follows. Catalyzes the NADPH-dependent reduction of N-acetyl-5-glutamyl phosphate to yield N-acetyl-L-glutamate 5-semialdehyde. This chain is N-acetyl-gamma-glutamyl-phosphate reductase, found in Methanopyrus kandleri (strain AV19 / DSM 6324 / JCM 9639 / NBRC 100938).